Reading from the N-terminus, the 182-residue chain is ATP synthase subunit b, chloroplastic (182 aa).

Residues 29–47 (IINLALLIVLVINVAKDVL) traverse the membrane as a helical segment.

It belongs to the ATPase B chain family. In terms of assembly, F-type ATPases have 2 components, F(1) - the catalytic core - and F(0) - the membrane proton channel. F(1) has five subunits: alpha(3), beta(3), gamma(1), delta(1), epsilon(1). F(0) has four main subunits: a(1), b(1), b'(1) and c(10-14). The alpha and beta chains form an alternating ring which encloses part of the gamma chain. F(1) is attached to F(0) by a central stalk formed by the gamma and epsilon chains, while a peripheral stalk is formed by the delta, b and b' chains.

It localises to the plastid. The protein resides in the chloroplast thylakoid membrane. In terms of biological role, f(1)F(0) ATP synthase produces ATP from ADP in the presence of a proton or sodium gradient. F-type ATPases consist of two structural domains, F(1) containing the extramembraneous catalytic core and F(0) containing the membrane proton channel, linked together by a central stalk and a peripheral stalk. During catalysis, ATP synthesis in the catalytic domain of F(1) is coupled via a rotary mechanism of the central stalk subunits to proton translocation. Functionally, component of the F(0) channel, it forms part of the peripheral stalk, linking F(1) to F(0). In Heterosigma akashiwo (strain NIES-293 / 8280G21-1), this protein is ATP synthase subunit b, chloroplastic.